The primary structure comprises 469 residues: UDP-N-acetylmuramate--L-alanine ligase (469 aa).

113-119 (GTHGKTT) provides a ligand contact to ATP.

This sequence belongs to the MurCDEF family.

It is found in the cytoplasm. It carries out the reaction UDP-N-acetyl-alpha-D-muramate + L-alanine + ATP = UDP-N-acetyl-alpha-D-muramoyl-L-alanine + ADP + phosphate + H(+). Its pathway is cell wall biogenesis; peptidoglycan biosynthesis. In terms of biological role, cell wall formation. This is UDP-N-acetylmuramate--L-alanine ligase from Neisseria meningitidis serogroup C / serotype 2a (strain ATCC 700532 / DSM 15464 / FAM18).